The sequence spans 287 residues: Probable glucose uptake protein GlcU (287 aa).

9 helical membrane-spanning segments follow: residues 7 to 29, 34 to 56, 58 to 75, 114 to 136, 156 to 178, 183 to 202, 209 to 228, 233 to 255, and 267 to 286; these read LIAL…VGGG, IRGT…HAAF, NLTV…WAFG, WSTI…GISL, MGIL…IFGV, ALFF…SMNH, TALN…FMFY, VGVA…GGIF, and IGIW…LGNL.

Belongs to the GRP transporter (TC 2.A.7.5) family.

It is found in the cell membrane. In terms of biological role, involved in the uptake of glucose. This is Probable glucose uptake protein GlcU (glcU) from Staphylococcus epidermidis (strain ATCC 35984 / DSM 28319 / BCRC 17069 / CCUG 31568 / BM 3577 / RP62A).